The chain runs to 1030 residues: Carbamoyl phosphate synthase arginine-specific large chain (1030 aa).

A carboxyphosphate synthetic domain region spans residues 1–401 (MPKDTSISSI…AIQKAAASLE (401 aa)). 12 residues coordinate ATP: Arg-129, Arg-169, Gly-175, Gly-176, Lys-208, Ile-210, Glu-215, Gly-241, Val-242, His-243, Gln-284, and Glu-298. The ATP-grasp 1 domain occupies 133-327 (RSLMNELKQP…IAKMAAKLAV (195 aa)). Mg(2+)-binding residues include Gln-284, Glu-298, and Asn-300. Mn(2+) contacts are provided by Gln-284, Glu-298, and Asn-300. An oligomerization domain region spans residues 402–548 (LKNIGTHLPE…YSTYFGETDG (147 aa)). Residues 549-928 (DISRKEKKRA…ALKKIYTRVW (380 aa)) form a carbamoyl phosphate synthetic domain region. Residues 675–863 (YQLLDELGLK…MIPLATRLLA (189 aa)) enclose the ATP-grasp 2 domain. ATP-binding residues include Arg-711, Gln-748, Val-750, Glu-754, Gly-779, Val-780, His-781, Ser-782, Gln-822, and Glu-834. Mg(2+) is bound by residues Gln-822, Glu-834, and Asn-836. Gln-822, Glu-834, and Asn-836 together coordinate Mn(2+). The 103-residue stretch at 925-1027 (TRVWSQKGSI…KDLYKKEVAS (103 aa)) folds into the MGS-like domain. The allosteric domain stretch occupies residues 929–1030 (SQKGSIYLQN…YKKEVASCTQ (102 aa)).

The protein belongs to the CarB family. In terms of assembly, composed of two chains; the small (or glutamine) chain promotes the hydrolysis of glutamine to ammonia, which is used by the large (or ammonia) chain to synthesize carbamoyl phosphate. Tetramer of heterodimers (alpha,beta)4. Mg(2+) serves as cofactor. It depends on Mn(2+) as a cofactor.

It carries out the reaction hydrogencarbonate + L-glutamine + 2 ATP + H2O = carbamoyl phosphate + L-glutamate + 2 ADP + phosphate + 2 H(+). The enzyme catalyses hydrogencarbonate + NH4(+) + 2 ATP = carbamoyl phosphate + 2 ADP + phosphate + 2 H(+). It participates in amino-acid biosynthesis; L-arginine biosynthesis; carbamoyl phosphate from bicarbonate: step 1/1. Its function is as follows. Large subunit of the glutamine-dependent carbamoyl phosphate synthetase (CPSase). CPSase catalyzes the formation of carbamoyl phosphate from the ammonia moiety of glutamine, carbonate, and phosphate donated by ATP, constituting the first step of the biosynthetic pathway leading to arginine and/or urea. The large subunit (synthetase) binds the substrates ammonia (free or transferred from glutamine from the small subunit), hydrogencarbonate and ATP and carries out an ATP-coupled ligase reaction, activating hydrogencarbonate by forming carboxy phosphate which reacts with ammonia to form carbamoyl phosphate. The protein is Carbamoyl phosphate synthase arginine-specific large chain of Bacillus subtilis (strain 168).